The following is a 772-amino-acid chain: Acylamino-acid-releasing enzyme 2 (772 aa).

Active-site charge relay system residues include serine 617, aspartate 708, and histidine 740.

It belongs to the peptidase S9C family. In terms of assembly, homotetramer.

It localises to the cytoplasm. The catalysed reaction is Cleavage of an N-acetyl or N-formyl amino acid from the N-terminus of a polypeptide.. Catalyzes the hydrolysis of the N-terminal peptide bond of an N-acetylated peptide to generate an N-acetylated amino acid and a peptide with a free N-terminus. This chain is Acylamino-acid-releasing enzyme 2, found in Oryza sativa subsp. japonica (Rice).